The chain runs to 94 residues: Non-specific lipid-transfer protein C4 (94 aa).

The N-terminal stretch at 1–26 is a signal peptide; sequence MAASKGNAAAAACALVLVLLAVGAEA. 4 disulfides stabilise this stretch: cysteine 34–cysteine 72, cysteine 44–cysteine 59, cysteine 60–cysteine 85, and cysteine 70–cysteine 92. Residue asparagine 91 is glycosylated (N-linked (GlcNAc...) asparagine).

The protein belongs to the plant LTP family.

Its function is as follows. Lipid-transfer protein that may be regulated by the transcription factor UDT1 in developing anthers and play a role in tapetum development. The sequence is that of Non-specific lipid-transfer protein C4 from Oryza sativa subsp. japonica (Rice).